A 1710-amino-acid chain; its full sequence is Extracellular matrix protein A (1710 aa).

An N-terminal signal peptide occupies residues 1–22; that stretch reads MKISIFILLLFISSMVIISVNA. Cys-rich CT repeat units lie at residues 43 to 70, 71 to 94, 95 to 117, 118 to 141, 142 to 165, 166 to 189, 190 to 213, 214 to 237, 238 to 261, 262 to 285, 286 to 309, 310 to 333, 334 to 357, 358 to 381, 382 to 405, 406 to 429, 430 to 453, 454 to 477, 478 to 501, 502 to 525, 526 to 549, 550 to 573, 574 to 597, 598 to 621, 622 to 645, 646 to 669, 670 to 693, 694 to 717, 718 to 741, 742 to 765, 766 to 789, 790 to 813, 814 to 837, 838 to 861, 862 to 885, 886 to 909, 910 to 933, 934 to 957, 958 to 981, 982 to 1005, 1006 to 1029, 1030 to 1053, 1054 to 1077, 1078 to 1101, 1102 to 1125, 1126 to 1149, 1150 to 1173, 1174 to 1197, 1198 to 1221, 1222 to 1245, 1246 to 1269, 1270 to 1293, 1294 to 1317, 1318 to 1341, 1342 to 1365, 1366 to 1389, 1390 to 1413, 1414 to 1437, 1438 to 1461, 1462 to 1485, 1486 to 1509, 1511 to 1534, 1558 to 1581, 1582 to 1606, 1608 to 1632, and 1658 to 1682; these read NRWS…CDDE, NACT…VDDK, NPCT…CDDK, NACT…CDDN, NPCT…VDDN, NPCT…VDDL, NKCT…CDDN, NACT…CDDK, NQCT…TDDN, NKCT…TDDN, KACT…CDDN, NACT…CDDS, NKCT…CDDS, NACT…TDDN, NACT…CDDR, NPCT…TDDS, DKCT…CDDN, DACT…TDDN, NKCT…CDDG, NKCT…CPKP, DKCS…CTSD, NKCQ…CDDG, NACT…LPKN, NKCI…CECD, and NPKT…VITS. 2 N-linked (GlcNAc...) asparagine glycosylation sites follow: Asn-150 and Asn-151. 2 N-linked (GlcNAc...) asparagine glycosylation sites follow: Asn-270 and Asn-271. Asn-415 is a glycosylation site (N-linked (GlcNAc...) asparagine). An N-linked (GlcNAc...) asparagine glycan is attached at Asn-535. N-linked (GlcNAc...) asparagine glycosylation is present at Asn-655. N-linked (GlcNAc...) asparagine glycosylation occurs at Asn-751. Asn-871, Asn-894, and Asn-895 each carry an N-linked (GlcNAc...) asparagine glycan. An N-linked (GlcNAc...) asparagine glycan is attached at Asn-1015. Asn-1110 and Asn-1111 each carry an N-linked (GlcNAc...) asparagine glycan. An N-linked (GlcNAc...) asparagine glycan is attached at Asn-1183. Asn-1255 is a glycosylation site (N-linked (GlcNAc...) asparagine). N-linked (GlcNAc...) asparagine glycosylation occurs at Asn-1351. The N-linked (GlcNAc...) asparagine glycan is linked to Asn-1530. N-linked (GlcNAc...) asparagine glycosylation is present at Asn-1624.

It localises to the secreted. In Dictyostelium discoideum (Social amoeba), this protein is Extracellular matrix protein A (ecmA).